Here is a 238-residue protein sequence, read N- to C-terminus: Probable transcriptional regulatory protein YeeN (238 aa).

The protein belongs to the TACO1 family. YeeN subfamily.

The protein localises to the cytoplasm. This Escherichia coli O157:H7 protein is Probable transcriptional regulatory protein YeeN.